Reading from the N-terminus, the 142-residue chain is Large ribosomal subunit protein uL13 (142 aa).

It belongs to the universal ribosomal protein uL13 family. In terms of assembly, part of the 50S ribosomal subunit.

This protein is one of the early assembly proteins of the 50S ribosomal subunit, although it is not seen to bind rRNA by itself. It is important during the early stages of 50S assembly. The protein is Large ribosomal subunit protein uL13 of Klebsiella pneumoniae (strain 342).